Reading from the N-terminus, the 228-residue chain is Rab-like protein 2B (228 aa).

Residues Gly28–Ser35, Asp76–Gln80, and Asn133–Asp136 contribute to the GTP site. Residues Leu200–Ser228 form a disordered region.

Belongs to the small GTPase superfamily. Rab family. As to quaternary structure, interacts (in its GTP-bound form) with CEP19 (via residues 121-150); this interaction is required for its localization to the mother centriole and cilium basal body. Interacts (in its GTP-bound form) with the intraflagellar transport (IFT) complex B (via the IFT74-IFT81 heterodimer). Binding to CEP19 and the IFT74-IFT81 heterodimer is mutually exclusive. Expressed in the testis.

The protein resides in the cytoplasm. The protein localises to the cytoskeleton. It is found in the microtubule organizing center. It localises to the centrosome. Its subcellular location is the centriole. The protein resides in the cilium basal body. Small GTPase required for ciliation. Activated in a guanine nucleotide exchange factor (GEF)-independent manner via its intrinsic GDP for GTP nucleotide exchange ability. Involved in ciliary assembly by binding the intraflagellar transport (IFT) complex B from the large pool pre-docked at the base of the cilium and thus triggers its entry into the cilia. The protein is Rab-like protein 2B (RABL2B) of Homo sapiens (Human).